Consider the following 307-residue polypeptide: tRNA pseudouridine synthase B (307 aa).

Aspartate 38 acts as the Nucleophile in catalysis.

It belongs to the pseudouridine synthase TruB family. Type 1 subfamily.

It catalyses the reaction uridine(55) in tRNA = pseudouridine(55) in tRNA. Functionally, responsible for synthesis of pseudouridine from uracil-55 in the psi GC loop of transfer RNAs. This chain is tRNA pseudouridine synthase B, found in Bacillus cereus (strain ZK / E33L).